A 151-amino-acid chain; its full sequence is Putative phosphatidylglycerol/phosphatidylinositol transfer protein 1 (151 aa).

The first 26 residues, 1 to 26, serve as a signal peptide directing secretion; it reads MKHSKNQIVYITFFIIILIVVKPIES.

It belongs to the NPC2 family. As to quaternary structure, monomer.

Catalyzes the intermembrane transfer of phosphatidylglycerol and phosphatidylinositol. The protein is Putative phosphatidylglycerol/phosphatidylinositol transfer protein 1 of Dictyostelium discoideum (Social amoeba).